The primary structure comprises 143 residues: Holo-[acyl-carrier-protein] synthase (143 aa).

Mg(2+) contacts are provided by D9 and E63.

The protein belongs to the P-Pant transferase superfamily. AcpS family. It depends on Mg(2+) as a cofactor.

The protein localises to the cytoplasm. The catalysed reaction is apo-[ACP] + CoA = holo-[ACP] + adenosine 3',5'-bisphosphate + H(+). In terms of biological role, transfers the 4'-phosphopantetheine moiety from coenzyme A to a Ser of acyl-carrier-protein. This is Holo-[acyl-carrier-protein] synthase from Burkholderia pseudomallei (strain 1106a).